The chain runs to 430 residues: Glutamate-1-semialdehyde 2,1-aminomutase (430 aa).

K267 bears the N6-(pyridoxal phosphate)lysine mark.

Belongs to the class-III pyridoxal-phosphate-dependent aminotransferase family. HemL subfamily. Homodimer. The cofactor is pyridoxal 5'-phosphate.

The protein resides in the cytoplasm. It catalyses the reaction (S)-4-amino-5-oxopentanoate = 5-aminolevulinate. The protein operates within porphyrin-containing compound metabolism; protoporphyrin-IX biosynthesis; 5-aminolevulinate from L-glutamyl-tRNA(Glu): step 2/2. This Sulfurovum sp. (strain NBC37-1) protein is Glutamate-1-semialdehyde 2,1-aminomutase.